Reading from the N-terminus, the 237-residue chain is Eukaryotic translation initiation factor 3 subunit K (237 aa).

Positions 44 to 219 (CDCNANRALL…EARKAEIRED (176 aa)) constitute a PCI domain.

The protein belongs to the eIF-3 subunit K family. As to quaternary structure, component of the eukaryotic translation initiation factor 3 (eIF-3) complex.

The protein resides in the cytoplasm. Its function is as follows. Component of the eukaryotic translation initiation factor 3 (eIF-3) complex, which is involved in protein synthesis of a specialized repertoire of mRNAs and, together with other initiation factors, stimulates binding of mRNA and methionyl-tRNAi to the 40S ribosome. The eIF-3 complex specifically targets and initiates translation of a subset of mRNAs involved in cell proliferation. This chain is Eukaryotic translation initiation factor 3 subunit K, found in Neurospora crassa (strain ATCC 24698 / 74-OR23-1A / CBS 708.71 / DSM 1257 / FGSC 987).